The following is a 185-amino-acid chain: Large ribosomal subunit protein bL25 (185 aa).

The protein belongs to the bacterial ribosomal protein bL25 family. CTC subfamily. As to quaternary structure, part of the 50S ribosomal subunit; part of the 5S rRNA/L5/L18/L25 subcomplex. Contacts the 5S rRNA. Binds to the 5S rRNA independently of L5 and L18.

This is one of the proteins that binds to the 5S RNA in the ribosome where it forms part of the central protuberance. The sequence is that of Large ribosomal subunit protein bL25 from Chlamydia trachomatis serovar D (strain ATCC VR-885 / DSM 19411 / UW-3/Cx).